Here is a 157-residue protein sequence, read N- to C-terminus: 2-C-methyl-D-erythritol 2,4-cyclodiphosphate synthase (157 aa).

Residues D8 and H10 each contribute to the a divalent metal cation site. Residues 8–10 (DVH) and 34–35 (HS) contribute to the 4-CDP-2-C-methyl-D-erythritol 2-phosphate site. A divalent metal cation is bound at residue H42. Residues 56 to 58 (DIG), 61 to 65 (FPDTD), 100 to 106 (AQAPKMA), 132 to 135 (TTTE), F139, and R142 each bind 4-CDP-2-C-methyl-D-erythritol 2-phosphate.

Belongs to the IspF family. As to quaternary structure, homotrimer. Requires a divalent metal cation as cofactor.

The catalysed reaction is 4-CDP-2-C-methyl-D-erythritol 2-phosphate = 2-C-methyl-D-erythritol 2,4-cyclic diphosphate + CMP. It participates in isoprenoid biosynthesis; isopentenyl diphosphate biosynthesis via DXP pathway; isopentenyl diphosphate from 1-deoxy-D-xylulose 5-phosphate: step 4/6. Functionally, involved in the biosynthesis of isopentenyl diphosphate (IPP) and dimethylallyl diphosphate (DMAPP), two major building blocks of isoprenoid compounds. Catalyzes the conversion of 4-diphosphocytidyl-2-C-methyl-D-erythritol 2-phosphate (CDP-ME2P) to 2-C-methyl-D-erythritol 2,4-cyclodiphosphate (ME-CPP) with a corresponding release of cytidine 5-monophosphate (CMP). This chain is 2-C-methyl-D-erythritol 2,4-cyclodiphosphate synthase, found in Azotobacter vinelandii (strain DJ / ATCC BAA-1303).